A 118-amino-acid polypeptide reads, in one-letter code: MDYVGGSLKLKNVKKKPLKKKKKDSKKLAEKVQEHSSRDKSPLEENGVSTYQMLRSKDTDSAMPMTEAQKHFESVQEQRLLQKAKNERLKTHKDRIDEYNRLLESQSEHFDMPKIGPG.

The tract at residues 1–49 (MDYVGGSLKLKNVKKKPLKKKKKDSKKLAEKVQEHSSRDKSPLEENGVS) is disordered. A compositionally biased stretch (basic residues) spans 11–25 (KNVKKKPLKKKKKDS). Basic and acidic residues predominate over residues 26–43 (KKLAEKVQEHSSRDKSPL).

This is an uncharacterized protein from Schizosaccharomyces pombe (strain 972 / ATCC 24843) (Fission yeast).